A 602-amino-acid polypeptide reads, in one-letter code: MQSETLLETLQNLPDQSGVYHYFDSRSKLLYVGKAKSLKKRVKSYFQFTPTLAPSPKLSPRIHKMISEAAFIRYIVVENEHDALILENSLIKQLKPKYNILLRDDKTYPYIYFDENESFPRLEITRKILPHKGVRYFGPYTTGARELLESLYELLPLVQKKGCLKAQKACLFYQIHRCLAPCESKISKERYGEIFKEALGLLQNHSKLISRLKERMEKLAENLRFEEAGELRDRIEKIKRIEAFSGIDLARLEDLDILAIATSGKHSMLTRLFMREGKVVSSTSTPLKAQEGLDEEEAYRRAILHYYDSFMPLPPKQILLPLELESKRELEAHLEGLFGRKIPLHHPKQGSKKALIDLALKNAEELLRLEGEKEEIPLLESLQELLGLESLPRRIEAFDTSHLRGEACVGAMVVYEEGFCKESYRRYALEGRDEYSQMREMLGRRAEAFDRESPPDLWLLDGGLGQIRLAQEIIESLGANVEIIAIAKEKIDAKAHRAKGAAKDILRTPTEEIRLLPSDKRLQLLQKIRDEVHRFAITYHRQQKLKKDRQIDLLEIKGIKKGKLKRLLDFFGSFEAIREASFEELCKVVSEGEARAILEASF.

Residues 15–100 (DQSGVYHYFD…IKQLKPKYNI (86 aa)) enclose the GIY-YIG domain. The region spanning 206–241 (SKLISRLKERMEKLAENLRFEEAGELRDRIEKIKRI) is the UVR domain.

The protein belongs to the UvrC family. Interacts with UvrB in an incision complex.

Its subcellular location is the cytoplasm. Its function is as follows. The UvrABC repair system catalyzes the recognition and processing of DNA lesions. UvrC both incises the 5' and 3' sides of the lesion. The N-terminal half is responsible for the 3' incision and the C-terminal half is responsible for the 5' incision. This chain is UvrABC system protein C, found in Wolinella succinogenes (strain ATCC 29543 / DSM 1740 / CCUG 13145 / JCM 31913 / LMG 7466 / NCTC 11488 / FDC 602W) (Vibrio succinogenes).